We begin with the raw amino-acid sequence, 766 residues long: Protein translocase subunit SecA 2 (766 aa).

Residues glutamine 84, 102–106, and aspartate 490 each bind ATP; that span reads GEGKT.

It belongs to the SecA family. As to quaternary structure, monomer and homodimer. Part of the essential Sec protein translocation apparatus which comprises SecA, SecYEG and auxiliary proteins SecDF. Other proteins may also be involved.

It localises to the cell membrane. It is found in the cytoplasm. The catalysed reaction is ATP + H2O + cellular proteinSide 1 = ADP + phosphate + cellular proteinSide 2.. Part of the Sec protein translocase complex. Interacts with the SecYEG preprotein conducting channel. Has a central role in coupling the hydrolysis of ATP to the transfer of proteins into and across the cell membrane, serving as an ATP-driven molecular motor driving the stepwise translocation of polypeptide chains across the membrane. The protein is Protein translocase subunit SecA 2 of Thermobifida fusca (strain YX).